A 164-amino-acid chain; its full sequence is Endoribonuclease YbeY (164 aa).

3 residues coordinate Zn(2+): His-124, His-128, and His-134.

Belongs to the endoribonuclease YbeY family. Requires Zn(2+) as cofactor.

Its subcellular location is the cytoplasm. In terms of biological role, single strand-specific metallo-endoribonuclease involved in late-stage 70S ribosome quality control and in maturation of the 3' terminus of the 16S rRNA. The sequence is that of Endoribonuclease YbeY from Nitrosomonas europaea (strain ATCC 19718 / CIP 103999 / KCTC 2705 / NBRC 14298).